The chain runs to 293 residues: Small ribosomal subunit protein uS2m (293 aa).

Residues 21–38 are compositionally biased toward low complexity; that stretch reads GRAAQRGRTLGSAAAAAA. Disordered regions lie at residues 21–49 and 263–293; these read GRAA…DRSA and QGAP…GHSP. Positions 39-49 are enriched in basic and acidic residues; the sequence is REPERDSDRSA. Pro residues predominate over residues 267–279; the sequence is GPHPANPAAPGAP.

The protein belongs to the universal ribosomal protein uS2 family. As to quaternary structure, component of the mitochondrial ribosome small subunit (28S) which comprises a 12S rRNA and about 30 distinct proteins.

The protein localises to the mitochondrion. In terms of biological role, required for mitoribosome formation and stability, and mitochondrial translation. The polypeptide is Small ribosomal subunit protein uS2m (MRPS2) (Bos taurus (Bovine)).